A 238-amino-acid polypeptide reads, in one-letter code: Auxin-responsive protein IAA2 (238 aa).

The EAR-like (transcriptional repression) signature appears at 24–28; sequence LCLGL. Composition is skewed to low complexity over residues 33 to 44, 59 to 69, and 85 to 94; these read SSSSSSKPSEGS, ASKPSGAAAAA, and ASSSSSSSKQ. 2 disordered regions span residues 33–69 and 82–114; these read SSSS…AAAA and RNLA…KDGG. The region spanning 118-216 is the PB1 domain; it reads GMFVKINMDG…TAKRLRVLKS (99 aa). Residues 217-238 are disordered; it reads SDLPPPSLMRAAGSRKRAAADS. Over residues 229 to 238 the composition is skewed to basic residues; the sequence is GSRKRAAADS.

Belongs to the Aux/IAA family. Homodimers and heterodimers. As to expression, highly expressed in flowers.

The protein localises to the nucleus. In terms of biological role, aux/IAA proteins are short-lived transcriptional factors that function as repressors of early auxin response genes at low auxin concentrations. The sequence is that of Auxin-responsive protein IAA2 (IAA2) from Oryza sativa subsp. japonica (Rice).